Reading from the N-terminus, the 66-residue chain is Large ribosomal subunit protein uL29 (66 aa).

The protein belongs to the universal ribosomal protein uL29 family.

The chain is Large ribosomal subunit protein uL29 from Petrotoga mobilis (strain DSM 10674 / SJ95).